The primary structure comprises 181 residues: Protein Syd (181 aa).

This sequence belongs to the Syd family.

The protein resides in the cell inner membrane. Interacts with the SecY protein in vivo. May bind preferentially to an uncomplexed state of SecY, thus functioning either as a chelating agent for excess SecY in the cell or as a regulatory factor that negatively controls the translocase function. The sequence is that of Protein Syd from Escherichia coli (strain K12 / DH10B).